Here is a 1469-residue protein sequence, read N- to C-terminus: Chromosome condensation protein dpy-27 (1469 aa).

A disordered region spans residues 1–25; that stretch reads MQPFKRRALTSDDDRPYADTDSMPE. A compositionally biased stretch (basic and acidic residues) spans 9–18; it reads LTSDDDRPYA. Residue 122 to 129 coordinates ATP; that stretch reads GPNGSGKS. Residues 356-542 adopt a coiled-coil conformation; sequence ELEENKDIML…KGTLQTMMAE (187 aa). The SMC hinge domain maps to 621-736; sequence PGFKGRLGDL…VDSLEEATRI (116 aa). The segment at 758-781 is disordered; it reads GALTGGGKPTTGRIRNDNNPNMSG. 3 coiled-coil regions span residues 805–974, 1016–1056, and 1159–1182; these read LKLQ…AQLE, AYQT…DIIE, and TSAKKFSDKLKAHREKLNELRMAR. The disordered stretch occupies residues 1404-1469; it reads LPEFNRFPPA…VQRRVRRSRH (66 aa). Residues 1439 to 1449 are compositionally biased toward acidic residues; it reads EEEDEEDELIE.

The protein belongs to the SMC family. SMC4 subfamily. In terms of assembly, component of the dosage compensation complex, which contains the mix-1/SMC2 and dpy-27/SMC4 heterodimer, and three non SMC subunits that probably regulate the complex: dpy-26, capg-1 and dpy-28. Within the complex, interacts with dpy-28, mix-1, dpy-26 and capg-1. Interacts with dpy-21. Interacts with dpy-28; the interaction is required for dpy-28 protein stability and dpy-28 association with the X chromosome. Interacts with smcl-1.

Its subcellular location is the nucleus. It is found in the chromosome. In terms of biological role, central component of the condensin I-like dosage compensation complex that associates specifically with hermaphrodite X chromosomes to reduce their gene transcription throughout development. Its strong similarity with the condensin subunit smc4 suggests that it may reduce the X-chromosome transcript level by condensing the chromatin structure during interphase. Involved in the recruitment of the dosage compensation proteins mix-1 and dpy-21 to the X chromosome. Might be involved in the reduction of histone H4 lysine 16 acetylation (H4K16ac) on dosage compensated X chromosomes. As a member of the dosage compensation complex, also binds to regulatory regions of the autosomal her-1 gene, required for male development, possibly contributing to its repression in hermaphrodites. Also plays a role in the regulation of growth and body fat metabolism downstream of the TOR complex 2 pathway. This chain is Chromosome condensation protein dpy-27 (dpy-27), found in Caenorhabditis elegans.